A 62-amino-acid polypeptide reads, in one-letter code: Large ribosomal subunit protein bL28 (62 aa).

The segment at 1-24 is disordered; it reads MGKQCFVTGRKASTGNNRSHALNS. Residues 11 to 24 show a composition bias toward polar residues; sequence KASTGNNRSHALNS.

The protein belongs to the bacterial ribosomal protein bL28 family.

The polypeptide is Large ribosomal subunit protein bL28 (Staphylococcus saprophyticus subsp. saprophyticus (strain ATCC 15305 / DSM 20229 / NCIMB 8711 / NCTC 7292 / S-41)).